A 410-amino-acid polypeptide reads, in one-letter code: Imidazolonepropionase (410 aa).

Residues His-73 and His-75 each contribute to the Fe(3+) site. Residues His-73 and His-75 each contribute to the Zn(2+) site. 4-imidazolone-5-propanoate contacts are provided by Arg-82, Tyr-145, and His-178. Tyr-145 contacts N-formimidoyl-L-glutamate. His-243 contributes to the Fe(3+) binding site. His-243 contributes to the Zn(2+) binding site. Gln-246 contributes to the 4-imidazolone-5-propanoate binding site. Asp-318 is a binding site for Fe(3+). Asp-318 lines the Zn(2+) pocket. 2 residues coordinate N-formimidoyl-L-glutamate: Asn-320 and Gly-322. 4-imidazolone-5-propanoate is bound at residue Ser-323.

The protein belongs to the metallo-dependent hydrolases superfamily. HutI family. Zn(2+) is required as a cofactor. It depends on Fe(3+) as a cofactor.

It is found in the cytoplasm. It catalyses the reaction 4-imidazolone-5-propanoate + H2O = N-formimidoyl-L-glutamate. It participates in amino-acid degradation; L-histidine degradation into L-glutamate; N-formimidoyl-L-glutamate from L-histidine: step 3/3. Functionally, catalyzes the hydrolytic cleavage of the carbon-nitrogen bond in imidazolone-5-propanoate to yield N-formimidoyl-L-glutamate. It is the third step in the universal histidine degradation pathway. The polypeptide is Imidazolonepropionase (Shewanella baltica (strain OS223)).